Reading from the N-terminus, the 289-residue chain is Energy-coupling factor transporter ATP-binding protein EcfA2 (289 aa).

The 244-residue stretch at 3–246 (IQAKKLNYTY…PEWLKNHHLN (244 aa)) folds into the ABC transporter domain. Position 40–47 (40–47 (GHTGSGKS)) interacts with ATP.

This sequence belongs to the ABC transporter superfamily. Energy-coupling factor EcfA family. Forms a stable energy-coupling factor (ECF) transporter complex composed of 2 membrane-embedded substrate-binding proteins (S component), 2 ATP-binding proteins (A component) and 2 transmembrane proteins (T component).

Its subcellular location is the cell membrane. Functionally, ATP-binding (A) component of a common energy-coupling factor (ECF) ABC-transporter complex. Unlike classic ABC transporters this ECF transporter provides the energy necessary to transport a number of different substrates. The chain is Energy-coupling factor transporter ATP-binding protein EcfA2 from Ligilactobacillus salivarius (strain UCC118) (Lactobacillus salivarius).